The sequence spans 666 residues: Probable potassium transport system protein Kup (666 aa).

12 consecutive transmembrane segments (helical) span residues 16–36 (GFII…LYTM), 58–78 (ISLI…LIAL), 100–120 (PWLI…GALT), 141–161 (IYQN…VLFG), 165–185 (FGTG…FSFL), 221–241 (IFIL…YSDL), 253–273 (WPFV…WILA), 294–314 (VYLV…LISG), 343–363 (LYIP…VLAF), 373–393 (YGLA…YYLI), 399–419 (PILA…FFLA), and 424–444 (FMHG…VMFI).

Belongs to the HAK/KUP transporter (TC 2.A.72) family.

It localises to the cell membrane. It carries out the reaction K(+)(in) + H(+)(in) = K(+)(out) + H(+)(out). Its function is as follows. Transport of potassium into the cell. Likely operates as a K(+):H(+) symporter. The polypeptide is Probable potassium transport system protein Kup (Streptococcus pyogenes serotype M49 (strain NZ131)).